The following is a 278-amino-acid chain: uncharacterized protein (278 aa).

Helical transmembrane passes span 1–21, 30–50, 56–76, 92–112, 116–136, 146–166, 170–190, 209–229, 230–250, and 258–278; these read MLEI…GIAY, AFTA…PLAL, VVID…SFYI, IALP…TVIY, LSLN…IIYG, LFYA…LDFL, LPVS…LSFT, GIFL…SSSW, NVVQ…AIFL, and LVAG…PPLQ. EamA domains follow at residues 12-136 and 154-274; these read ICWA…IIYG and FSWA…LLLL.

It belongs to the EamA transporter family.

Its subcellular location is the cell membrane. This is an uncharacterized protein from Archaeoglobus fulgidus (strain ATCC 49558 / DSM 4304 / JCM 9628 / NBRC 100126 / VC-16).